Reading from the N-terminus, the 139-residue chain is Large ribosomal subunit protein uL16 (139 aa).

Residues 1–16 (MLIPKRTKYRKQHRPV) show a composition bias toward basic residues. Residues 1–22 (MLIPKRTKYRKQHRPVRSGMSK) form a disordered region.

The protein belongs to the universal ribosomal protein uL16 family. As to quaternary structure, part of the 50S ribosomal subunit.

Functionally, binds 23S rRNA and is also seen to make contacts with the A and possibly P site tRNAs. The chain is Large ribosomal subunit protein uL16 from Bifidobacterium longum subsp. infantis (strain ATCC 15697 / DSM 20088 / JCM 1222 / NCTC 11817 / S12).